The following is a 96-amino-acid chain: Co-chaperonin GroES 1 (96 aa).

The protein belongs to the GroES chaperonin family. As to quaternary structure, heptamer of 7 subunits arranged in a ring. Interacts with the chaperonin GroEL.

It localises to the cytoplasm. Together with the chaperonin GroEL, plays an essential role in assisting protein folding. The GroEL-GroES system forms a nano-cage that allows encapsulation of the non-native substrate proteins and provides a physical environment optimized to promote and accelerate protein folding. GroES binds to the apical surface of the GroEL ring, thereby capping the opening of the GroEL channel. The protein is Co-chaperonin GroES 1 of Vibrio cholerae serotype O1 (strain ATCC 39315 / El Tor Inaba N16961).